The sequence spans 509 residues: ATP synthase subunit alpha (509 aa).

169–176 (GDRQTGKT) contributes to the ATP binding site.

It belongs to the ATPase alpha/beta chains family. F-type ATPases have 2 components, CF(1) - the catalytic core - and CF(0) - the membrane proton channel. CF(1) has five subunits: alpha(3), beta(3), gamma(1), delta(1), epsilon(1). CF(0) has four main subunits: a(1), b(1), b'(1) and c(9-12).

The protein resides in the cellular chromatophore membrane. The catalysed reaction is ATP + H2O + 4 H(+)(in) = ADP + phosphate + 5 H(+)(out). Produces ATP from ADP in the presence of a proton gradient across the membrane. The alpha chain is a regulatory subunit. This Rhodobacter capsulatus (Rhodopseudomonas capsulata) protein is ATP synthase subunit alpha.